Reading from the N-terminus, the 156-residue chain is Ribosome maturation factor RimP (156 aa).

Belongs to the RimP family.

It is found in the cytoplasm. Required for maturation of 30S ribosomal subunits. The sequence is that of Ribosome maturation factor RimP from Bacillus velezensis (strain DSM 23117 / BGSC 10A6 / LMG 26770 / FZB42) (Bacillus amyloliquefaciens subsp. plantarum).